Here is a 152-residue protein sequence, read N- to C-terminus: Superoxide dismutase [Cu-Zn] (152 aa).

Residues H44, H46, and H61 each coordinate Cu cation. 4 residues coordinate Zn(2+): H61, H69, H78, and D81. H118 lines the Cu cation pocket.

It belongs to the Cu-Zn superoxide dismutase family. As to quaternary structure, homodimer. The cofactor is Cu cation. Zn(2+) is required as a cofactor.

The protein localises to the cytoplasm. The catalysed reaction is 2 superoxide + 2 H(+) = H2O2 + O2. In terms of biological role, destroys radicals which are normally produced within the cells and which are toxic to biological systems. This is Superoxide dismutase [Cu-Zn] from Drosophila pseudoobscura pseudoobscura (Fruit fly).